The chain runs to 277 residues: Phosphatidylserine decarboxylase proenzyme (277 aa).

Residues D88, H144, and S242 each act as charge relay system; for autoendoproteolytic cleavage activity in the active site. The Schiff-base intermediate with substrate; via pyruvic acid; for decarboxylase activity role is filled by S242. S242 carries the post-translational modification Pyruvic acid (Ser); by autocatalysis.

Belongs to the phosphatidylserine decarboxylase family. PSD-B subfamily. Prokaryotic type I sub-subfamily. In terms of assembly, heterodimer of a large membrane-associated beta subunit and a small pyruvoyl-containing alpha subunit. It depends on pyruvate as a cofactor. Post-translationally, is synthesized initially as an inactive proenzyme. Formation of the active enzyme involves a self-maturation process in which the active site pyruvoyl group is generated from an internal serine residue via an autocatalytic post-translational modification. Two non-identical subunits are generated from the proenzyme in this reaction, and the pyruvate is formed at the N-terminus of the alpha chain, which is derived from the carboxyl end of the proenzyme. The autoendoproteolytic cleavage occurs by a canonical serine protease mechanism, in which the side chain hydroxyl group of the serine supplies its oxygen atom to form the C-terminus of the beta chain, while the remainder of the serine residue undergoes an oxidative deamination to produce ammonia and the pyruvoyl prosthetic group on the alpha chain. During this reaction, the Ser that is part of the protease active site of the proenzyme becomes the pyruvoyl prosthetic group, which constitutes an essential element of the active site of the mature decarboxylase.

It localises to the cell membrane. The enzyme catalyses a 1,2-diacyl-sn-glycero-3-phospho-L-serine + H(+) = a 1,2-diacyl-sn-glycero-3-phosphoethanolamine + CO2. The protein operates within phospholipid metabolism; phosphatidylethanolamine biosynthesis; phosphatidylethanolamine from CDP-diacylglycerol: step 2/2. Its function is as follows. Catalyzes the formation of phosphatidylethanolamine (PtdEtn) from phosphatidylserine (PtdSer). The chain is Phosphatidylserine decarboxylase proenzyme from Psychrobacter arcticus (strain DSM 17307 / VKM B-2377 / 273-4).